The chain runs to 642 residues: Chaperone protein DnaK (642 aa).

T200 carries the phosphothreonine; by autocatalysis modification. The span at 603-623 shows a compositional bias: low complexity; the sequence is AAAAEQGGNADAASGNAQASK. The disordered stretch occupies residues 603 to 627; the sequence is AAAAEQGGNADAASGNAQASKAADD.

The protein belongs to the heat shock protein 70 family.

Functionally, acts as a chaperone. This is Chaperone protein DnaK from Xanthomonas campestris pv. campestris (strain B100).